We begin with the raw amino-acid sequence, 141 residues long: Large ribosomal subunit protein uL16 (141 aa).

Positions 1–21 (MLMPKRTKFRKQMKGRNRGKS) are enriched in basic residues. A disordered region spans residues 1–22 (MLMPKRTKFRKQMKGRNRGKSF).

It belongs to the universal ribosomal protein uL16 family. In terms of assembly, part of the 50S ribosomal subunit.

Binds 23S rRNA and is also seen to make contacts with the A and possibly P site tRNAs. This Wolinella succinogenes (strain ATCC 29543 / DSM 1740 / CCUG 13145 / JCM 31913 / LMG 7466 / NCTC 11488 / FDC 602W) (Vibrio succinogenes) protein is Large ribosomal subunit protein uL16.